The primary structure comprises 178 residues: Conodipine-P2 (178 aa).

The signal sequence occupies residues 1–24 (MKLLAPVLWAMAALGVTWLVAVDS). 4-hydroxyproline occurs at positions 38, 42, and 49. Residue His54 is part of the active site. The propeptide at 98–130 (KREVTSHRATSIAHSRLWKTALDQKSFLNRKAR) is interchain peptide. Gln131 is subject to Pyrrolidone carboxylic acid. Pro137 is modified (4-hydroxyproline).

This sequence belongs to the phospholipase A2 family. Group IX subfamily. Heterodimer of an alpha and a beta chain; probably disulfide-linked. The cofactor is Ca(2+). As to expression, expressed by the venom duct.

It localises to the secreted. The catalysed reaction is a 1,2-diacyl-sn-glycero-3-phosphocholine + H2O = a 1-acyl-sn-glycero-3-phosphocholine + a fatty acid + H(+). In terms of biological role, catalyzes the calcium-dependent hydrolysis of the 2-acyl groups in 3-sn-phosphoglycerides. This Conus purpurascens (Purple cone) protein is Conodipine-P2.